The chain runs to 341 residues: tRNA N6-adenosine threonylcarbamoyltransferase (341 aa).

2 residues coordinate Fe cation: histidine 111 and histidine 115. Substrate contacts are provided by residues 134–138 (LVSGG), aspartate 167, glycine 180, and asparagine 276. Aspartate 304 serves as a coordination point for Fe cation.

The protein belongs to the KAE1 / TsaD family. It depends on Fe(2+) as a cofactor.

The protein resides in the cytoplasm. The catalysed reaction is L-threonylcarbamoyladenylate + adenosine(37) in tRNA = N(6)-L-threonylcarbamoyladenosine(37) in tRNA + AMP + H(+). Required for the formation of a threonylcarbamoyl group on adenosine at position 37 (t(6)A37) in tRNAs that read codons beginning with adenine. Is involved in the transfer of the threonylcarbamoyl moiety of threonylcarbamoyl-AMP (TC-AMP) to the N6 group of A37, together with TsaE and TsaB. TsaD likely plays a direct catalytic role in this reaction. The sequence is that of tRNA N6-adenosine threonylcarbamoyltransferase from Pseudomonas entomophila (strain L48).